Consider the following 633-residue polypeptide: MSGGSRIQLLSPRLTNQIAAGEVVERPASVAKELLENSLDSGARRIDVEVEQGGVKLLRVRDDGSGISADDLPLALARHATSKIRELEDLEGVLSLGFRGEALASISSVARLTLTSRTASASEAWQVETEGRDMTPRVQPAAHPVGTSVEVRDLFFNTPARRKFLKAEKTEFDHLQEVIRRLALARFDVAFHLRHNGKSILSLHEAHDETARARRVGAICGGGFMEQALPIDVERNGLRLWGWVGLPTFSRSQADLQYFFVNGRAVRDKLVAHAVRQAYRDVLFNGRHPTFVLFLELEPNGVDVNVHPTKHEVRFREGRSVHDFLYGTLHRALADVRPEDHLASAPAAAAEITRPTGQQAGEFGPQGEMRLASPVLEQPQVPQHSISNGGSGAGYQYQYTPRPSQPLPAAEAQAVYREFYKPLNDDAAGPATLPQSQGDIPPLGYALAQLKGIYILAENAAGLVLVDMHAAHERIMYERLKVAMASEGLSGQPLLVPESLALSQREADCAEEHAQWFQRLGFELQRLGPETLAIRQIPALLKQAEANRLVQDVLADLMEYGTSDRIQAHLNELLGTMACHGAVRANRRLAIPEMNALLRDMENTERSGQCNHGRPTWTQMGLDDLDKLFLRGR.

It belongs to the DNA mismatch repair MutL/HexB family.

This protein is involved in the repair of mismatches in DNA. It is required for dam-dependent methyl-directed DNA mismatch repair. May act as a 'molecular matchmaker', a protein that promotes the formation of a stable complex between two or more DNA-binding proteins in an ATP-dependent manner without itself being part of a final effector complex. This is DNA mismatch repair protein MutL from Pseudomonas putida (strain W619).